A 467-amino-acid polypeptide reads, in one-letter code: L-seryl-tRNA(Sec) selenium transferase (467 aa).

The residue at position 298 (Lys298) is an N6-(pyridoxal phosphate)lysine.

The protein belongs to the SelA family. The cofactor is pyridoxal 5'-phosphate.

It is found in the cytoplasm. It carries out the reaction L-seryl-tRNA(Sec) + selenophosphate + H(+) = L-selenocysteinyl-tRNA(Sec) + phosphate. Its pathway is aminoacyl-tRNA biosynthesis; selenocysteinyl-tRNA(Sec) biosynthesis; selenocysteinyl-tRNA(Sec) from L-seryl-tRNA(Sec) (bacterial route): step 1/1. In terms of biological role, converts seryl-tRNA(Sec) to selenocysteinyl-tRNA(Sec) required for selenoprotein biosynthesis. The polypeptide is L-seryl-tRNA(Sec) selenium transferase (Alkaliphilus metalliredigens (strain QYMF)).